A 78-amino-acid chain; its full sequence is Acyl carrier protein (78 aa).

The Carrier domain maps to 1–76 (MSLEDDVKLI…DVITYIKTRQ (76 aa)). Position 36 is an O-(pantetheine 4'-phosphoryl)serine (Ser36).

The protein belongs to the acyl carrier protein (ACP) family. Post-translationally, 4'-phosphopantetheine is transferred from CoA to a specific serine of apo-ACP by AcpS. This modification is essential for activity because fatty acids are bound in thioester linkage to the sulfhydryl of the prosthetic group.

It is found in the cytoplasm. It functions in the pathway lipid metabolism; fatty acid biosynthesis. Its function is as follows. Carrier of the growing fatty acid chain in fatty acid biosynthesis. The protein is Acyl carrier protein of Chlamydia felis (strain Fe/C-56) (Chlamydophila felis).